An 821-amino-acid polypeptide reads, in one-letter code: Protein EFR3 homolog A (821 aa).

Serine 360, serine 363, serine 422, and serine 694 each carry phosphoserine.

It belongs to the EFR3 family. Component of a phosphatidylinositol 4-kinase (PI4K) complex, composed of PI4KA, EFR3 (EFR3A or EFR3B), TTC7 (TTC7A or TTC7B) and HYCC (HYCC1 or HYCC2). Post-translationally, palmitoylated at its N-terminus, anchoring the protein to the plasma membrane.

It localises to the cell membrane. The protein localises to the cytoplasm. The protein resides in the cytosol. Its function is as follows. Component of a complex required to localize phosphatidylinositol 4-kinase (PI4K) to the plasma membrane. The complex acts as a regulator of phosphatidylinositol 4-phosphate (PtdIns(4)P) synthesis. In the complex, EFR3A probably acts as the membrane-anchoring component. Also involved in responsiveness to G-protein-coupled receptors; it is however unclear whether this role is direct or indirect. This is Protein EFR3 homolog A from Homo sapiens (Human).